A 500-amino-acid chain; its full sequence is Maturase K (500 aa).

Belongs to the intron maturase 2 family. MatK subfamily.

It localises to the plastid. The protein localises to the chloroplast. Its function is as follows. Usually encoded in the trnK tRNA gene intron. Probably assists in splicing its own and other chloroplast group II introns. In Helianthus annuus (Common sunflower), this protein is Maturase K.